Here is a 597-residue protein sequence, read N- to C-terminus: Elongation factor 4 (597 aa).

A tr-type G domain is found at 2–184 (DHIRNFSIIA…SLIAKVPPPK (183 aa)). GTP-binding positions include 14 to 19 (DHGKST) and 131 to 134 (NKID).

It belongs to the TRAFAC class translation factor GTPase superfamily. Classic translation factor GTPase family. LepA subfamily.

It is found in the cell inner membrane. It carries out the reaction GTP + H2O = GDP + phosphate + H(+). Its function is as follows. Required for accurate and efficient protein synthesis under certain stress conditions. May act as a fidelity factor of the translation reaction, by catalyzing a one-codon backward translocation of tRNAs on improperly translocated ribosomes. Back-translocation proceeds from a post-translocation (POST) complex to a pre-translocation (PRE) complex, thus giving elongation factor G a second chance to translocate the tRNAs correctly. Binds to ribosomes in a GTP-dependent manner. The polypeptide is Elongation factor 4 (Burkholderia lata (strain ATCC 17760 / DSM 23089 / LMG 22485 / NCIMB 9086 / R18194 / 383)).